Here is a 346-residue protein sequence, read N- to C-terminus: Holliday junction branch migration complex subunit RuvB (346 aa).

Over residues 1–11 (MTEQRTIASSA) the composition is skewed to polar residues. Residues 1 to 20 (MTEQRTIASSATREDEAADA) are disordered. The interval 1 to 183 (MTEQRTIASS…FGIVQRLEFY (183 aa)) is large ATPase domain (RuvB-L). ATP-binding positions include isoleucine 22, arginine 23, glycine 64, lysine 67, threonine 68, threonine 69, 130–132 (EDF), arginine 173, tyrosine 183, and arginine 220. Mg(2+) is bound at residue threonine 68. The small ATPAse domain (RuvB-S) stretch occupies residues 184 to 254 (SPQELTRIVI…VAQAAMQMLK (71 aa)). The segment at 257 to 346 (PEGFDELDRR…PAIGEPGDLF (90 aa)) is head domain (RuvB-H). The DNA site is built by arginine 293, arginine 312, and arginine 317.

This sequence belongs to the RuvB family. In terms of assembly, homohexamer. Forms an RuvA(8)-RuvB(12)-Holliday junction (HJ) complex. HJ DNA is sandwiched between 2 RuvA tetramers; dsDNA enters through RuvA and exits via RuvB. An RuvB hexamer assembles on each DNA strand where it exits the tetramer. Each RuvB hexamer is contacted by two RuvA subunits (via domain III) on 2 adjacent RuvB subunits; this complex drives branch migration. In the full resolvosome a probable DNA-RuvA(4)-RuvB(12)-RuvC(2) complex forms which resolves the HJ.

It is found in the cytoplasm. It catalyses the reaction ATP + H2O = ADP + phosphate + H(+). Its function is as follows. The RuvA-RuvB-RuvC complex processes Holliday junction (HJ) DNA during genetic recombination and DNA repair, while the RuvA-RuvB complex plays an important role in the rescue of blocked DNA replication forks via replication fork reversal (RFR). RuvA specifically binds to HJ cruciform DNA, conferring on it an open structure. The RuvB hexamer acts as an ATP-dependent pump, pulling dsDNA into and through the RuvAB complex. RuvB forms 2 homohexamers on either side of HJ DNA bound by 1 or 2 RuvA tetramers; 4 subunits per hexamer contact DNA at a time. Coordinated motions by a converter formed by DNA-disengaged RuvB subunits stimulates ATP hydrolysis and nucleotide exchange. Immobilization of the converter enables RuvB to convert the ATP-contained energy into a lever motion, pulling 2 nucleotides of DNA out of the RuvA tetramer per ATP hydrolyzed, thus driving DNA branch migration. The RuvB motors rotate together with the DNA substrate, which together with the progressing nucleotide cycle form the mechanistic basis for DNA recombination by continuous HJ branch migration. Branch migration allows RuvC to scan DNA until it finds its consensus sequence, where it cleaves and resolves cruciform DNA. The protein is Holliday junction branch migration complex subunit RuvB of Xanthomonas campestris pv. campestris (strain ATCC 33913 / DSM 3586 / NCPPB 528 / LMG 568 / P 25).